Here is a 236-residue protein sequence, read N- to C-terminus: Small ribosomal subunit protein uS3 (236 aa).

In terms of domain architecture, KH type-2 spans 39–107 (IREFLTEELK…DTSLNIVEVR (69 aa)). Residues 214–236 (ASERRAVEGDNQGSSSNRRRENA) are disordered.

The protein belongs to the universal ribosomal protein uS3 family. Part of the 30S ribosomal subunit. Forms a tight complex with proteins S10 and S14.

Its function is as follows. Binds the lower part of the 30S subunit head. Binds mRNA in the 70S ribosome, positioning it for translation. This is Small ribosomal subunit protein uS3 from Brucella canis (strain ATCC 23365 / NCTC 10854 / RM-666).